A 237-amino-acid polypeptide reads, in one-letter code: Aliphatic sulfonates import ATP-binding protein SsuB 1 (237 aa).

Residues leucine 5 to alanine 221 enclose the ABC transporter domain. Glycine 38–serine 45 serves as a coordination point for ATP.

Belongs to the ABC transporter superfamily. Aliphatic sulfonates importer (TC 3.A.1.17.2) family. The complex is composed of two ATP-binding proteins (SsuB), two transmembrane proteins (SsuC) and a solute-binding protein (SsuA).

The protein resides in the cell inner membrane. The enzyme catalyses ATP + H2O + aliphatic sulfonate-[sulfonate-binding protein]Side 1 = ADP + phosphate + aliphatic sulfonateSide 2 + [sulfonate-binding protein]Side 1.. Functionally, part of the ABC transporter complex SsuABC involved in aliphatic sulfonates import. Responsible for energy coupling to the transport system. The sequence is that of Aliphatic sulfonates import ATP-binding protein SsuB 1 from Pseudomonas syringae pv. syringae (strain B728a).